The primary structure comprises 395 residues: Elongation factor Tu (395 aa).

The tr-type G domain maps to 10–204 (KEHANIGTIG…AVDDYIPTPE (195 aa)). Residues 19-26 (GHVDHGKT) form a G1 region. Residue 19–26 (GHVDHGKT) participates in GTP binding. Mg(2+) is bound at residue Thr26. The G2 stretch occupies residues 60 to 64 (GITIN). The segment at 81–84 (DCPG) is G3. Residues 81-85 (DCPGH) and 136-139 (NKAD) each bind GTP. Residues 136 to 139 (NKAD) are G4. The G5 stretch occupies residues 174–176 (SAL).

It belongs to the TRAFAC class translation factor GTPase superfamily. Classic translation factor GTPase family. EF-Tu/EF-1A subfamily. As to quaternary structure, monomer.

The protein resides in the cytoplasm. The catalysed reaction is GTP + H2O = GDP + phosphate + H(+). GTP hydrolase that promotes the GTP-dependent binding of aminoacyl-tRNA to the A-site of ribosomes during protein biosynthesis. This Staphylococcus carnosus (strain TM300) protein is Elongation factor Tu.